The chain runs to 393 residues: Ig heavy chain C region (393 aa).

3 consecutive Ig-like domains span residues 63–157 (PTVI…RNIT), 168–260 (PVIK…ASIH), and 270–370 (PSVS…RTVN). N-linked (GlcNAc...) asparagine glycans are attached at residues asparagine 119, asparagine 155, asparagine 200, asparagine 230, asparagine 329, asparagine 366, asparagine 370, and asparagine 380.

In Heterodontus francisci (Horn shark), this protein is Ig heavy chain C region.